The following is a 618-amino-acid chain: Grainyhead-like protein 1 homolog (618 aa).

Positions 1–91 (MTQEYDNKRP…EGEHPEPEHS (91 aa)) are transcription activation. Positions 76 to 92 (SSAVKPEGEHPEPEHSK) are enriched in basic and acidic residues. The disordered stretch occupies residues 76–100 (SSAVKPEGEHPEPEHSKRNSIPNVT). Phosphothreonine is present on Thr-208. One can recognise a Grh/CP2 DB domain in the interval 248–474 (SGNNFEYTLE…DLDTQPVLFI (227 aa)). Interaction with DNA stretches follow at residues 380–389 (TDFSSQKGVK) and 427–430 (RKIR).

It belongs to the grh/CP2 family. Grainyhead subfamily. Binds DNA as homodimer. Homodimer, also forms heterodimers with GRHL2 or GRHL3. In terms of processing, methylation at Arg-9 and Lys-116 may be involved in regulating transcriptional activation. As to expression, isoform 1 is highly expressed in brain, pancreas, tonsil, placenta and kidney. Isoform 2 is highly expressed in brain and liver. Expression in the skin is confined to the suprabasal layers of the epidermis and to the hair follicles.

It is found in the nucleus. Its function is as follows. Transcription factor involved in epithelial development. Binds directly to the consensus DNA sequence 5'-AACCGGTT-3'. Important regulator of DSG1 in the context of hair anchorage and epidermal differentiation, participates in the maintenance of the skin barrier. There is no genetic interaction with GRHL3, nor functional cooperativity due to diverse target gene selectivity during epithelia development. May play a role in regulating glucose homeostasis and insulin signaling. The polypeptide is Grainyhead-like protein 1 homolog (Mus musculus (Mouse)).